A 141-amino-acid chain; its full sequence is Decarboxylase CPUR_05434 (141 aa).

The EthD domain occupies 26–121; sequence EGMSEEAYRN…MHDHEMFADT (96 aa).

Belongs to the tpcK family.

The enzyme catalyses atrochrysone carboxylate + H(+) = atrochrysone + CO2. In terms of biological role, decarboxylase; part of the ergochrome gene cluster responsible for the typical purple-black color of the ergot sclerotia. The ergochrome gene cluster produces several ergot pigments including the yellow ergochrome secalonic acid and its derivatives, as well as the red anthraquinones endocrocin and clavorubin. The pathway begins with the synthesis of atrochrysone thioester by the polyketide synthase (PKS) CPUR_05437. The atrochrysone carboxyl ACP thioesterase CPUR_05436 then breaks the thioester bond and releases the atrochrysone carboxylic acid from CPUR_05437. The decarboxylase CPUR_05434 then catalyzes the concerted decarboxylation-elimination required to convert atochrysone carboxylic acid into emodin anthrone, which is further oxidized to emodin by the anthrone oxygenase CPUR_05435. Emodin is further modified to yield monodictyphenone via several steps involving CPUR_05427, CPUR_05428, CPUR_05429 and CPUR_05430. The short chain dehydrogenase/reductase CPUR_05418 then catalyzes the C-5 ketoreduction to give the xanthone skeleton of the monomeric units. Ergochromes formation requires further dimerization steps of different xanthone units, probably catalyzed by the cytochrome P450 monooxygenase CPUR_05419. CPUR_05425, CPUR_05426 and CPUR_05431 are unique to Claviceps, thus it is likely that they are involved in further modification of xanthone units or in their dimerization. The yellow ergochromes and the red anthraquinone pigments endocrocin and clavorubin are products from the same PKS derived precursors and the latter are likely shunt products in the pathway of xanthone biosynthesis. It is proposed that atrochrysone carboxylic acid released from the PKS CPUR_05437 can also be converted to endocrocin anthrone which is further oxidized into endocrocin by CPUR_05435. Endocrocin could be then modified to clavorubin, possibly by CPUR_05423 and CPUR_05431. Clavorubin is the principal anthraquinone metabolite produced by the cluster with a much higher yield compared to endocrocin. This is Decarboxylase CPUR_05434 from Claviceps purpurea (strain 20.1) (Ergot fungus).